We begin with the raw amino-acid sequence, 277 residues long: Large ribosomal subunit protein uL2c (277 aa).

Residues 1-11 (MNTRSYSTFTP) show a composition bias toward polar residues. 2 disordered regions span residues 1–47 (MNTR…RNNS) and 254–277 (YSAL…RRRK).

The protein belongs to the universal ribosomal protein uL2 family. In terms of assembly, part of the 50S ribosomal subunit.

The protein resides in the plastid. It localises to the chloroplast. The protein is Large ribosomal subunit protein uL2c (rpl2) of Cryptomeria japonica (Japanese cedar).